The following is a 425-amino-acid chain: Probable G-protein coupled receptor 63 (425 aa).

The Extracellular portion of the chain corresponds to 1–87 (MVVSGVLTAP…VFKSLNLAVQ (87 aa)). N-linked (GlcNAc...) asparagine glycosylation is found at Asn22, Asn34, and Asn68. The chain crosses the membrane as a helical span at residues 88-112 (IILSAIMIFILFVSFLGNLVVCLMV). Topologically, residues 113-123 (YQKAAMRSAIN) are cytoplasmic. The chain crosses the membrane as a helical span at residues 124–148 (ILLASLAFADMLLAVLNMPFALVTI). Over 149-165 (LTTRWIFGKFFCRLSAM) the chain is Extracellular. The helical transmembrane segment at 166 to 190 (FFWLFVIEGVAILLIISIDRFLIIV) threads the bilayer. The Cytoplasmic segment spans residues 191–202 (QRQDKLNPYRAK). A helical transmembrane segment spans residues 203 to 222 (VLIAVSWATAFSVAFPLAVG). At 223 to 247 (NPDLQIPSRAPQCVFGYTTNSGYQA) the chain is on the extracellular side. The helical transmembrane segment at 248–272 (YVILISLISFFIPFLVILYSFMGIL) threads the bilayer. Residues 273–321 (NTLRHNALRIHSYPEGICLSQASKLGLMSLQRPFQMSIDMGFKTRAFTT) are Cytoplasmic-facing. Residues 322–345 (ILILFAVFIVCWAPFTTYSLVATF) form a helical membrane-spanning segment. Residues 346-357 (SKHFYYQHNFFE) are Extracellular-facing. Residues 358-379 (ISTWLLWLCYLKSALNPLIYYW) traverse the membrane as a helical segment. The Cytoplasmic portion of the chain corresponds to 380 to 425 (RIKKFHDACLDMMPKSFKFLPRLPGHTRRRIRPSAVYVCGEHRTVL).

It belongs to the G-protein coupled receptor 1 family. Brain specific.

The protein localises to the cell membrane. In terms of biological role, orphan receptor. May play a role in brain function. The protein is Probable G-protein coupled receptor 63 (Gpr63) of Mus musculus (Mouse).